We begin with the raw amino-acid sequence, 463 residues long: Sporulation-specific protein 22 (463 aa).

The first 25 residues, Met1–Gly25, serve as a signal peptide directing secretion. 5 LRR repeats span residues Ser127 to Leu147, Ile185 to Lys206, Val207 to Gly233, Leu251 to Ser275, and Ile302 to Ala325. N-linked (GlcNAc...) asparagine glycans are attached at residues Asn256, Asn314, and Asn327. Asn440 carries GPI-anchor amidated asparagine lipidation. The propeptide at Ser441 to Phe463 is removed in mature form.

Belongs to the SPS2 family.

The protein resides in the cell membrane. Functionally, redundant with SPS2 for the organization of the beta-glucan layer of the spore wall. This Saccharomyces cerevisiae (strain ATCC 204508 / S288c) (Baker's yeast) protein is Sporulation-specific protein 22 (SPS22).